Consider the following 205-residue polypeptide: Glycerol-3-phosphate acyltransferase (205 aa).

5 consecutive transmembrane segments (helical) span residues 4 to 24 (IAPGLVLLAYLCGSISSAILV), 80 to 100 (PFWLGLVAIAACVGHIWPVFF), 107 to 127 (GVATAFGAIAPIGLDLTGVMA), 130 to 150 (WLLTILLSGYSSLGAIVSALI), and 155 to 175 (VWWFKPQYTFPVSMLSCLILL).

It belongs to the PlsY family. Probably interacts with PlsX.

The protein resides in the cell inner membrane. The catalysed reaction is an acyl phosphate + sn-glycerol 3-phosphate = a 1-acyl-sn-glycero-3-phosphate + phosphate. The protein operates within lipid metabolism; phospholipid metabolism. Catalyzes the transfer of an acyl group from acyl-phosphate (acyl-PO(4)) to glycerol-3-phosphate (G3P) to form lysophosphatidic acid (LPA). This enzyme utilizes acyl-phosphate as fatty acyl donor, but not acyl-CoA or acyl-ACP. This chain is Glycerol-3-phosphate acyltransferase, found in Klebsiella pneumoniae subsp. pneumoniae (strain ATCC 700721 / MGH 78578).